The following is a 148-amino-acid chain: Holo-[acyl-carrier-protein] synthase (148 aa).

Asp-8 and Glu-57 together coordinate Mg(2+).

Belongs to the P-Pant transferase superfamily. AcpS family. It depends on Mg(2+) as a cofactor.

The protein localises to the cytoplasm. It carries out the reaction apo-[ACP] + CoA = holo-[ACP] + adenosine 3',5'-bisphosphate + H(+). Functionally, transfers the 4'-phosphopantetheine moiety from coenzyme A to a Ser of acyl-carrier-protein. The polypeptide is Holo-[acyl-carrier-protein] synthase (Ruegeria pomeroyi (strain ATCC 700808 / DSM 15171 / DSS-3) (Silicibacter pomeroyi)).